The primary structure comprises 229 residues: Cytidylate kinase (229 aa).

An ATP-binding site is contributed by 7-15 (GPAGAGKSS).

Belongs to the cytidylate kinase family. Type 1 subfamily.

It localises to the cytoplasm. It carries out the reaction CMP + ATP = CDP + ADP. It catalyses the reaction dCMP + ATP = dCDP + ADP. The chain is Cytidylate kinase from Rhodopirellula baltica (strain DSM 10527 / NCIMB 13988 / SH1).